The following is a 953-amino-acid chain: Coatomer subunit beta (953 aa).

HEAT repeat units follow at residues 17–54, 96–131, 132–168, 240–276, 277–314, 316–353, and 396–433; these read DSEP…NGEK, QEMI…KEAE, LLEP…NFEH, SERA…SAPT, AIKA…HPSH, RVLQ…SRNV, and DMAA…RFDN.

Oligomeric complex that consists of at least the alpha, beta, beta', gamma, delta, epsilon and zeta subunits.

The protein resides in the cytoplasm. It is found in the golgi apparatus membrane. The protein localises to the cytoplasmic vesicle. Its subcellular location is the COPI-coated vesicle membrane. Its function is as follows. The coatomer is a cytosolic protein complex that binds to dilysine motifs and reversibly associates with Golgi non-clathrin-coated vesicles, which further mediate biosynthetic protein transport from the ER, via the Golgi up to the trans Golgi network. Coatomer complex is required for budding from Golgi membranes, and is essential for the retrograde Golgi-to-ER transport of dilysine-tagged proteins. This is Coatomer subunit beta (COPB1) from Gallus gallus (Chicken).